Reading from the N-terminus, the 208-residue chain is NAD(P)H dehydrogenase (quinone) (208 aa).

The Flavodoxin-like domain occupies 4–199 (VNVIFHSIHG…AMARYQGRHV (196 aa)). Residues 10 to 15 (SIHGHT) and 87 to 89 (TRY) contribute to the FMN site. A substrate-binding site is contributed by Trp-107. Residues 122-128 (SSGTQHG) and His-143 contribute to the FMN site.

It belongs to the WrbA family. It depends on FMN as a cofactor.

The catalysed reaction is a quinone + NADH + H(+) = a quinol + NAD(+). It catalyses the reaction a quinone + NADPH + H(+) = a quinol + NADP(+). This Methanosarcina barkeri (strain Fusaro / DSM 804) protein is NAD(P)H dehydrogenase (quinone).